The sequence spans 319 residues: Acetyl-coenzyme A carboxylase carboxyl transferase subunit alpha (319 aa).

In terms of domain architecture, CoA carboxyltransferase C-terminal spans D35–D296.

It belongs to the AccA family. As to quaternary structure, acetyl-CoA carboxylase is a heterohexamer composed of biotin carboxyl carrier protein (AccB), biotin carboxylase (AccC) and two subunits each of ACCase subunit alpha (AccA) and ACCase subunit beta (AccD).

The protein resides in the cytoplasm. The catalysed reaction is N(6)-carboxybiotinyl-L-lysyl-[protein] + acetyl-CoA = N(6)-biotinyl-L-lysyl-[protein] + malonyl-CoA. It participates in lipid metabolism; malonyl-CoA biosynthesis; malonyl-CoA from acetyl-CoA: step 1/1. Functionally, component of the acetyl coenzyme A carboxylase (ACC) complex. First, biotin carboxylase catalyzes the carboxylation of biotin on its carrier protein (BCCP) and then the CO(2) group is transferred by the carboxyltransferase to acetyl-CoA to form malonyl-CoA. The polypeptide is Acetyl-coenzyme A carboxylase carboxyl transferase subunit alpha (Vibrio campbellii (strain ATCC BAA-1116)).